We begin with the raw amino-acid sequence, 39 residues long: Photosystem II reaction center protein L (39 aa).

A helical membrane pass occupies residues 18-38; that stretch reads SLYLGLLFVFVTGVLMSSYFF.

The protein belongs to the PsbL family. In terms of assembly, PSII is composed of 1 copy each of membrane proteins PsbA, PsbB, PsbC, PsbD, PsbE, PsbF, PsbH, PsbI, PsbJ, PsbK, PsbL, PsbM, PsbT, PsbX, PsbY, PsbZ, Psb30/Ycf12, peripheral proteins PsbO, CyanoQ (PsbQ), PsbU, PsbV and a large number of cofactors. It forms dimeric complexes.

Its subcellular location is the cellular thylakoid membrane. In terms of biological role, one of the components of the core complex of photosystem II (PSII). PSII is a light-driven water:plastoquinone oxidoreductase that uses light energy to abstract electrons from H(2)O, generating O(2) and a proton gradient subsequently used for ATP formation. It consists of a core antenna complex that captures photons, and an electron transfer chain that converts photonic excitation into a charge separation. This subunit is found at the monomer-monomer interface and is required for correct PSII assembly and/or dimerization. The chain is Photosystem II reaction center protein L from Parasynechococcus marenigrum (strain WH8102).